Here is a 142-residue protein sequence, read N- to C-terminus: Large ribosomal subunit protein cL37 alpha (142 aa).

The transit peptide at 1-62 (MALLSPLLSL…AQKRGTVVAM (62 aa)) directs the protein to the chloroplast. A disordered region spans residues 123–142 (RKLRKRGAWPPSKMKKLKNV).

Belongs to the chloroplast-specific ribosomal protein cL37 family. Component of the chloroplast large ribosomal subunit (LSU). Mature 70S chloroplast ribosomes of higher plants consist of a small (30S) and a large (50S) subunit. The 30S small subunit contains 1 molecule of ribosomal RNA (16S rRNA) and 24 different proteins. The 50S large subunit contains 3 rRNA molecules (23S, 5S and 4.5S rRNA) and 33 different proteins.

The protein resides in the plastid. The protein localises to the chloroplast. Its function is as follows. Component of the chloroplast ribosome (chloro-ribosome), a dedicated translation machinery responsible for the synthesis of chloroplast genome-encoded proteins, including proteins of the transcription and translation machinery and components of the photosynthetic apparatus. This is Large ribosomal subunit protein cL37 alpha (PSRP5) from Spinacia oleracea (Spinach).